The primary structure comprises 517 residues: DNA relaxase MbeA (517 aa).

Residue Y19 is the O-(5'-phospho-DNA)-tyrosine intermediate of the active site. The a divalent metal cation site is built by H97, E104, and N106. Disordered regions lie at residues 281–310 (YSPVHSLDRGIAGKTPGRGERGDDAAQEGR), 380–405 (PSVREISGGDSLSGERVGTSEGVTQS), and 496–517 (SLERERQPEIQERTLDGPSLGW). The span at 297 to 310 (GRGERGDDAAQEGR) shows a compositional bias: basic and acidic residues. The span at 496–510 (SLERERQPEIQERTL) shows a compositional bias: basic and acidic residues.

The protein to E.coli MbaA and MbkA. Interacts with MbeB and MbeC to form the relaxosome. It depends on Mn(2+) as a cofactor. Co(2+) is required as a cofactor. Requires Ni(2+) as cofactor.

The enzyme catalyses ATP-independent breakage of single-stranded DNA, followed by passage and rejoining.. Its function is as follows. Relaxase involved in plasmid ColE1 conjugative mobilization and is thus essential to promote the specific transfer of the plasmid during conjugation. First catalyzes the specific cleavage of one of the DNA strands at oriT, forming a covalent 5'-phosphotyrosine intermediate. The nic site corresponds to 5'-(1469)CTGG/CTTA(1462)-3' in the cleaved strand. The cleaved strand is then transferred through the dedicated type IV secretion apparatus. MbeA remains covalently linked at the 5' end of the strand, and once in the recipient cell, it probably catalyzes the rejoining of the two ends of the strand, re-forming the circular plasmid DNA. Is functional in vitro without a requirement for the conjugative accessory proteins. The protein is DNA relaxase MbeA (mbeA) of Escherichia coli.